The chain runs to 197 residues: MADDVIDWLPYVDTLDQRYLNEVEKTVTAELAAIEQQELHPRIAELFPAVRHHWDEQYGLYKDNVVGLEGSNKRAAEDGVLSELKRRCPGIDISVYNDDSEDPVLLATIAGYRYHQDLVVTQLLPQTLENQWAINNAYLEGAEAAVRRQLQEQEQQIAQLDRHRQELQQREALRFRYLERQWRDRLHGNLERAAGNI.

Associated with the spliceosome.

It localises to the nucleus. Its function is as follows. Involved in pre-mRNA splicing. The chain is Pre-mRNA-splicing factor SNT309 (SNT309) from Eremothecium gossypii (strain ATCC 10895 / CBS 109.51 / FGSC 9923 / NRRL Y-1056) (Yeast).